Here is a 339-residue protein sequence, read N- to C-terminus: DNA-directed RNA polymerase subunit alpha (339 aa).

The segment at 1 to 233 is alpha N-terminal domain (alpha-NTD); the sequence is MVREEVAGST…DLFLPFLHAE (233 aa). The tract at residues 266 to 339 is alpha C-terminal domain (alpha-CTD); it reads GIPLNCIFID…IDLLKNKLSF (74 aa).

Belongs to the RNA polymerase alpha chain family. In terms of assembly, in plastids the minimal PEP RNA polymerase catalytic core is composed of four subunits: alpha, beta, beta', and beta''. When a (nuclear-encoded) sigma factor is associated with the core the holoenzyme is formed, which can initiate transcription.

It localises to the plastid. The protein localises to the chloroplast. It carries out the reaction RNA(n) + a ribonucleoside 5'-triphosphate = RNA(n+1) + diphosphate. DNA-dependent RNA polymerase catalyzes the transcription of DNA into RNA using the four ribonucleoside triphosphates as substrates. The polypeptide is DNA-directed RNA polymerase subunit alpha (Elymus canadensis (Canada wild rye)).